Reading from the N-terminus, the 132-residue chain is MTGGKSGGKASGSKNAQSRSSKAGLAFPVGRVHRLLRKGNYAQRVGAGAPVYLAAVLEYLAAEILELAGNAARDNKKTRIIPRHLQLAIRNDEELNKLLGHVTIAQGGVLPNIHQNLLPKKTPKAGKGSQEL.

A compositionally biased stretch (gly residues) spans 1 to 10 (MTGGKSGGKA). A disordered region spans residues 1 to 24 (MTGGKSGGKASGSKNAQSRSSKAG). N6-acetyllysine is present on residues Lys5 and Lys9. Gln106 bears the N5-methylglutamine mark. Ser129 carries the phosphoserine modification. The short motif at 129–130 (SQ) is the [ST]-Q motif element.

This sequence belongs to the histone H2A family. As to quaternary structure, the nucleosome is a histone octamer containing two molecules each of H2A, H2B, H3 and H4 assembled in one H3-H4 heterotetramer and two H2A-H2B heterodimers. The octamer wraps approximately 147 bp of DNA. In terms of processing, phosphorylated to form H2AS128ph (gamma-H2A) in response to DNA double-strand breaks (DSBs) generated by exogenous genotoxic agents and by stalled replication forks. Phosphorylation is dependent on the DNA damage checkpoint kinases mec1/ATR and tel1/ATM, spreads on either side of a detected DSB site and may mark the surrounding chromatin for recruitment of proteins required for DNA damage signaling and repair. Gamma-H2A is removed from the DNA prior to the strand invasion-primer extension step of the repair process and subsequently dephosphorylated. Dephosphorylation is necessary for efficient recovery from the DNA damage checkpoint. Post-translationally, acetylated by esa1 to form H2AK4ac and H2AK7ac.

Its subcellular location is the nucleus. It localises to the chromosome. Core component of nucleosome which plays a central role in DNA double strand break (DSB) repair. Nucleosomes wrap and compact DNA into chromatin, limiting DNA accessibility to the cellular machineries which require DNA as a template. Histones thereby play a central role in transcription regulation, DNA repair, DNA replication and chromosomal stability. DNA accessibility is regulated via a complex set of post-translational modifications of histones, also called histone code, and nucleosome remodeling. The polypeptide is Histone H2A (htaA) (Emericella nidulans (strain FGSC A4 / ATCC 38163 / CBS 112.46 / NRRL 194 / M139) (Aspergillus nidulans)).